We begin with the raw amino-acid sequence, 391 residues long: Immunoglobulin heavy constant alpha 2 (391 aa).

The Extracellular portion of the chain corresponds to alanine 1–threonine 357. Ig-like domains lie at proline 6–threonine 98, proline 112–threonine 207, and proline 215–aspartate 317. Residues cysteine 26 and cysteine 85 are joined by a disulfide bond. Asparagine 47 carries N-linked (GlcNAc...) asparagine glycosylation. Residue asparagine 92 is glycosylated (N-linked (GlcNAc...) (complex) asparagine). Disulfide bonds link cysteine 110-cysteine 167 and cysteine 134-cysteine 191. N-linked (GlcNAc...) asparagine glycosylation occurs at asparagine 131. Asparagine 205 is a glycosylation site (N-linked (GlcNAc...) (complex) asparagine). Cysteines 237 and 300 form a disulfide. Aspartate 327 carries N-linked (GlcNAc...) (complex) asparagine glycosylation. The chain crosses the membrane as a helical span at residues isoleucine 358–valine 379. Over arginine 380–tyrosine 391 the chain is Cytoplasmic.

In terms of assembly, immunoglobulins are composed of two identical heavy chains and two identical light chains; disulfide-linked. Monomeric or polymeric. Part of the secretory IgA (sIgA) complex that consists of two, four or five IgA monomers, and two additional non-Ig polypeptides, namely the JCHAIN and the secretory component (the proteolytic product of PIGR).

It is found in the secreted. The protein localises to the cell membrane. Constant region of immunoglobulin heavy chains. Immunoglobulins, also known as antibodies, are membrane-bound or secreted glycoproteins produced by B lymphocytes. In the recognition phase of humoral immunity, the membrane-bound immunoglobulins serve as receptors which, upon binding of a specific antigen, trigger the clonal expansion and differentiation of B lymphocytes into immunoglobulins-secreting plasma cells. Secreted immunoglobulins mediate the effector phase of humoral immunity, which results in the elimination of bound antigens. The antigen binding site is formed by the variable domain of one heavy chain, together with that of its associated light chain. Thus, each immunoglobulin has two antigen binding sites with remarkable affinity for a particular antigen. The variable domains are assembled by a process called V-(D)-J rearrangement and can then be subjected to somatic hypermutations which, after exposure to antigen and selection, allow affinity maturation for a particular antigen. Ig alpha is the major immunoglobulin class in body secretions. The polypeptide is Immunoglobulin heavy constant alpha 2 (Homo sapiens (Human)).